An 82-amino-acid chain; its full sequence is Acyl carrier protein (82 aa).

The 76-residue stretch at 4–79 (EKIFQELKNI…DVVDIIESNL (76 aa)) folds into the Carrier domain. At serine 39 the chain carries O-(pantetheine 4'-phosphoryl)serine.

Belongs to the acyl carrier protein (ACP) family. In terms of processing, 4'-phosphopantetheine is transferred from CoA to a specific serine of apo-ACP by AcpS. This modification is essential for activity because fatty acids are bound in thioester linkage to the sulfhydryl of the prosthetic group.

The protein localises to the cytoplasm. The protein operates within lipid metabolism; fatty acid biosynthesis. In terms of biological role, carrier of the growing fatty acid chain in fatty acid biosynthesis. The polypeptide is Acyl carrier protein (Coprothermobacter proteolyticus (strain ATCC 35245 / DSM 5265 / OCM 4 / BT)).